A 316-amino-acid chain; its full sequence is tRNA methyltransferase 10 homolog B (316 aa).

A coiled-coil region spans residues 73 to 98 (EKIVAAKKSKRKQEKERRKANRVENS). The interval 77–96 (AAKKSKRKQEKERRKANRVE) is disordered. An SAM-dependent MTase TRM10-type domain is found at 113–310 (IKERLLEAKH…KGVSSRKGYV (198 aa)).

The protein belongs to the class IV-like SAM-binding methyltransferase superfamily. TRM10 family.

It carries out the reaction guanosine(9) in tRNA + S-adenosyl-L-methionine = N(1)-methylguanosine(9) in tRNA + S-adenosyl-L-homocysteine + H(+). S-adenosyl-L-methionine-dependent guanine N(1)-methyltransferase that catalyzes the formation of N(1)-methylguanine at position 9 (m1G9) in tRNAs. Probably not able to catalyze formation of N(1)-methyladenine at position 9 (m1A9) in tRNAs. The chain is tRNA methyltransferase 10 homolog B (TRMT10B) from Bos taurus (Bovine).